Reading from the N-terminus, the 118-residue chain is Ribulose bisphosphate carboxylase small subunit (118 aa).

The protein belongs to the RuBisCO small chain family. In terms of assembly, heterohexadecamer of 8 large and 8 small subunits.

It localises to the carboxysome. Functionally, ruBisCO catalyzes two reactions: the carboxylation of D-ribulose 1,5-bisphosphate, the primary event in carbon dioxide fixation, as well as the oxidative fragmentation of the pentose substrate in the photorespiration process. Both reactions occur simultaneously and in competition at the same active site. Although the small subunit is not catalytic it is essential for maximal activity. The sequence is that of Ribulose bisphosphate carboxylase small subunit from Thermosynechococcus vestitus (strain NIES-2133 / IAM M-273 / BP-1).